The chain runs to 285 residues: Mediator of RNA polymerase II transcription subunit 4 (285 aa).

A compositionally biased stretch (low complexity) spans 1–13 (MSTPGPVPSSTSV). Positions 1-25 (MSTPGPVPSSTSVATLPFSAQDKTQ) are disordered. Residues 31–115 (ELQSVGIYQD…TREILETLNT (85 aa)) are a coiled coil. Positions 206–285 (DNVNNDNNTS…DLDLFNPDEF (80 aa)) are disordered. Composition is skewed to basic and acidic residues over residues 216-250 (KIDEMRNTNEDSVDDRFNNKEQVQDATEDTERRGS) and 257-267 (GKEDSETKSEE). A compositionally biased stretch (acidic residues) spans 268–285 (NPDLELDLDLDLFNPDEF).

The protein belongs to the Mediator complex subunit 4 family. Component of the Mediator complex.

Its subcellular location is the nucleus. Functionally, component of the Mediator complex, a coactivator involved in the regulated transcription of nearly all RNA polymerase II-dependent genes. Mediator functions as a bridge to convey information from gene-specific regulatory proteins to the basal RNA polymerase II transcription machinery. Mediator is recruited to promoters by direct interactions with regulatory proteins and serves as a scaffold for the assembly of a functional preinitiation complex with RNA polymerase II and the general transcription factors. This is Mediator of RNA polymerase II transcription subunit 4 (MED4) from Kluyveromyces lactis (strain ATCC 8585 / CBS 2359 / DSM 70799 / NBRC 1267 / NRRL Y-1140 / WM37) (Yeast).